The sequence spans 99 residues: Protein IDA-LIKE 3 (99 aa).

The N-terminal stretch at 1–32 (MSSRSHRSRKYQLTRTIPILVLLLVLLSCCNG) is a signal peptide. The span at 36-45 (TNVFNTSSPP) shows a compositional bias: polar residues. Disordered regions lie at residues 36–58 (TNVFNTSSPPKQKDVVSPPHDHV) and 73–99 (SLPRQFPVPTSGPSRKHNEIGLSSTKT). A compositionally biased stretch (basic and acidic residues) spans 46-58 (KQKDVVSPPHDHV).

Expressed in flowers and seedlings. Detected at the base of pedicel, in the floral abscission zone and in vascular tissues.

It localises to the secreted. The protein localises to the extracellular space. Its function is as follows. May be involved in floral abscission. This chain is Protein IDA-LIKE 3 (IDL3), found in Arabidopsis thaliana (Mouse-ear cress).